A 750-amino-acid polypeptide reads, in one-letter code: 5-methyltetrahydropteroyltriglutamate--homocysteine methyltransferase (750 aa).

5-methyltetrahydropteroyltri-L-glutamate-binding positions include 15–18 (RELK) and lysine 114. Residues 425-427 (IGS) and glutamate 478 each bind L-homocysteine. L-methionine is bound by residues 425–427 (IGS) and glutamate 478. Residue tryptophan 555 coordinates 5-methyltetrahydropteroyltri-L-glutamate. Residue aspartate 593 participates in L-homocysteine binding. Aspartate 593 contributes to the L-methionine binding site. Residue glutamate 599 participates in 5-methyltetrahydropteroyltri-L-glutamate binding. Residues histidine 636, cysteine 638, and glutamate 660 each contribute to the Zn(2+) site. Catalysis depends on histidine 689, which acts as the Proton donor. Cysteine 721 is a binding site for Zn(2+).

It belongs to the vitamin-B12 independent methionine synthase family. Requires Zn(2+) as cofactor.

It carries out the reaction 5-methyltetrahydropteroyltri-L-glutamate + L-homocysteine = tetrahydropteroyltri-L-glutamate + L-methionine. It functions in the pathway amino-acid biosynthesis; L-methionine biosynthesis via de novo pathway; L-methionine from L-homocysteine (MetE route): step 1/1. Catalyzes the transfer of a methyl group from 5-methyltetrahydrofolate to homocysteine resulting in methionine formation. The protein is 5-methyltetrahydropteroyltriglutamate--homocysteine methyltransferase of Streptococcus gordonii (strain Challis / ATCC 35105 / BCRC 15272 / CH1 / DL1 / V288).